A 581-amino-acid chain; its full sequence is Protein FAM83D (581 aa).

The tract at residues 1–297 is DUF1669; the sequence is MALRYDGLDE…LYAQSKPISS (297 aa). The segment at 75 to 101 is disordered; it reads PGEEGAAAGAEDSFGSSHDCSSGTYFP. Polar residues predominate over residues 88–98; the sequence is FGSSHDCSSGT. At Ser296 the chain carries Phosphoserine. Residues 338–581 are required for interaction with KIF22 and function in chromosome congression; the sequence is TPRKVELGGE…REIMLYPSYQ (244 aa). 2 disordered regions span residues 366–401 and 426–503; these read EDYF…MSDV and QTVV…GPPK. Over residues 369 to 382 the composition is skewed to basic and acidic residues; the sequence is FSSRKDRLEGRRVT. The segment covering 426-438 has biased composition (low complexity); that stretch reads QTVVPTTSATTQT. Ser456 is modified (phosphoserine). Low complexity predominate over residues 462 to 488; sequence SVSRSSSLRSSSSLSSQGSVASSIGSQ. At Thr507 the chain carries Phosphothreonine.

This sequence belongs to the FAM83 family. As to quaternary structure, interacts with FBXW7; promotes FBXW7 degradation. May interact with RAF1. Interacts with KIF22; recruits KIF22 to mitotic spindle microtubules. Interacts (via C-terminus) with DYNLL1. Interacts with HMMR. Directly interacts (via DUF1669) with CSNK1A1 and CSNK1A1L. In terms of processing, phosphorylated during mitosis.

Its subcellular location is the cytoplasm. The protein resides in the cytoskeleton. It localises to the spindle. The protein localises to the spindle pole. Its function is as follows. Through the degradation of FBXW7, may act indirectly on the expression and downstream signaling of MTOR, JUN and MYC. May play also a role in cell proliferation through activation of the ERK1/ERK2 signaling cascade. May also be important for proper chromosome congression and alignment during mitosis through its interaction with KIF22. In Bos taurus (Bovine), this protein is Protein FAM83D.